Here is a 1578-residue protein sequence, read N- to C-terminus: Chitinase ChiA (1578 aa).

The first 19 residues, Met-1–Ala-19, serve as a signal peptide directing secretion. Residues Lys-25–Val-466 form the GH18 1 domain. The interval Lys-26–Asp-446 is GH18N. Residues Asp-92–Ala-93 and Gly-119–Thr-122 each bind chitin. The active-site Proton donor is Glu-162. Chitin contacts are provided by residues Tyr-163, Phe-249–Asp-252, and Trp-441. One can recognise a CNA-B domain in the interval Thr-485–Leu-536. Residues Lys-1142 to Asp-1462 form a GH18C region. One can recognise a GH18 2 domain in the interval Lys-1142–Gln-1483. Glu-1264 functions as the Proton donor in the catalytic mechanism. The tract at residues Ser-1473 to Asn-1578 is CTD.

The protein belongs to the glycosyl hydrolase 18 family. Chitinase class II subfamily.

The protein localises to the secreted. The enzyme catalyses Random endo-hydrolysis of N-acetyl-beta-D-glucosaminide (1-&gt;4)-beta-linkages in chitin and chitodextrins.. In terms of biological role, major extracellular chitinase, which is essential for chitin utilization. The chain is Chitinase ChiA (chiA) from Flavobacterium johnsoniae (strain ATCC 17061 / DSM 2064 / JCM 8514 / BCRC 14874 / CCUG 350202 / NBRC 14942 / NCIMB 11054 / UW101) (Cytophaga johnsonae).